The following is a 218-amino-acid chain: UPF0502 protein VS_II0353 (218 aa).

This sequence belongs to the UPF0502 family.

In Vibrio atlanticus (strain LGP32) (Vibrio splendidus (strain Mel32)), this protein is UPF0502 protein VS_II0353.